A 63-amino-acid polypeptide reads, in one-letter code: MEVYSDRQLAKDQAARLRQGFSAYAETNSLASLIKKELQSHNLQVYEDLTDFGCWFIPVTDEH.

This is an uncharacterized protein from Bacillus subtilis (strain 168).